Here is a 192-residue protein sequence, read N- to C-terminus: Imidazoleglycerol-phosphate dehydratase (192 aa).

This sequence belongs to the imidazoleglycerol-phosphate dehydratase family.

Its subcellular location is the cytoplasm. The enzyme catalyses D-erythro-1-(imidazol-4-yl)glycerol 3-phosphate = 3-(imidazol-4-yl)-2-oxopropyl phosphate + H2O. It participates in amino-acid biosynthesis; L-histidine biosynthesis; L-histidine from 5-phospho-alpha-D-ribose 1-diphosphate: step 6/9. The protein is Imidazoleglycerol-phosphate dehydratase of Staphylococcus aureus (strain MRSA252).